A 293-amino-acid chain; its full sequence is Membrane protein RL13 (293 aa).

A signal peptide spans 1-19; sequence MHWHLAITWTVIILTFSEC. Residues 245–265 form a helical membrane-spanning segment; that stretch reads IPLGIHAVWAGIVVSVALIAL.

It localises to the virion membrane. Functionally, may play a role in modifying tropism or in modulating cell signaling during virus entry. Since RL13 expression severely impairs HCMV replication in epithelial cell cultures, it may act as a regulator promoting persistence by suppressing the switch to fully lytic infection. This is Membrane protein RL13 (RL13) from Human cytomegalovirus (strain Merlin) (HHV-5).